The following is a 95-amino-acid chain: Enhancer of yellow 2 transcription factor (95 aa).

The protein belongs to the ENY2 family. Component of the nuclear pore complex (NPC)-associated AMEX complex (anchoring and mRNA export complex), composed of at least e(y)2 and xmas-2. Component of the SAGA transcription coactivator-HAT complexes, at least composed of Ada2b, e(y)2, Pcaf/Gcn5, Taf10 and Nipped-A/Trrap. Within the SAGA complex, e(y)2, Sgf11, and not/nonstop form an additional subcomplex of SAGA called the DUB module (deubiquitination module). Component of the THO complex, composed of at least e(y)2, HPR1, THO2, THOC5, THOC6 and THOC7. Interacts with e(y)1. Interacts with su(Hw) (via zinc fingers). Interacts with xmas-2; required for localization to the nuclear periphery. Interacts with the nuclear pore complex (NPC).

Its subcellular location is the nucleus. The protein localises to the nucleoplasm. It localises to the cytoplasm. Involved in mRNA export coupled transcription activation by association with both the AMEX and the SAGA complexes. The SAGA complex is a multiprotein complex that activates transcription by remodeling chromatin and mediating histone acetylation and deubiquitination. Within the SAGA complex, participates in a subcomplex that specifically deubiquitinates histone H2B. The SAGA complex is recruited to specific gene promoters by activators, where it is required for transcription. Required for nuclear receptor-mediated transactivation. Involved in transcription elongation by recruiting the THO complex onto nascent mRNA. The AMEX complex functions in docking export-competent ribonucleoprotein particles (mRNPs) to the nuclear entrance of the nuclear pore complex (nuclear basket). AMEX participates in mRNA export and accurate chromatin positioning in the nucleus by tethering genes to the nuclear periphery. This Drosophila virilis (Fruit fly) protein is Enhancer of yellow 2 transcription factor.